The sequence spans 902 residues: AP-4 complex accessory subunit RUSC1 (902 aa).

Disordered regions lie at residues 31-67 (ELQE…SNSP), 81-155 (LENR…PGTC), 189-227 (QDVP…KTEP), and 247-450 (KTTE…AQAG). A compositionally biased stretch (low complexity) spans 94–112 (AASPSDPGCSSSLSSCSDL). The span at 249-261 (TENNNTGWKNNGN) shows a compositional bias: low complexity. Residues 277-289 (WKTNTRITDSGSK) show a composition bias toward polar residues. The span at 291 to 309 (DAGKIDGGWRSDVSEEPVP) shows a compositional bias: basic and acidic residues. Pro residues-rich tracts occupy residues 381–390 (PAPPVPPRDP) and 398–407 (PPRPPPPPVP). Low complexity predominate over residues 433 to 450 (PAAGEEAPAAKEPGAQAG). The interval 470–605 (MAEAQSGTGQ…FHAFILGLLN (136 aa)) is interaction with TRAF6. The RUN domain occupies 522 to 666 (DVGHLVLTTL…LTFHLDLLFE (145 aa)). Positions 606-672 (TKQLELWFSS…LLFEHHHHLP (67 aa)) are interaction with IKBKG. Disordered stretches follow at residues 706–729 (LRGT…PGSW) and 747–776 (GFPL…TDEM). The region spanning 844–902 (QTHRAVRALCDHTAARPDQLSFRRGEVLRVITTVDEDWLRCGRDGMEGLVPVGYTSLVL) is the SH3 domain.

Associated component of the adapter-like complex 4 (AP-4). Interacts with IKBKG and TRAF6. Interacts with F-actin, acetylated actin, TUBB3, STX1A, KIF5B and KLC1. Phosphorylated on serine residues following nuclear translocation. Post-translationally, polyubiquitinated; polyubiquitination involves TRAF6. As to expression, predominantly expressed in brain.

The protein localises to the cytoplasm. Its subcellular location is the nucleus. The protein resides in the cytoskeleton. It localises to the cytoplasmic vesicle. It is found in the early endosome. The protein localises to the postsynaptic density. Its subcellular location is the golgi apparatus. In terms of biological role, associates with the adapter-like complex 4 (AP-4) and may therefore play a role in vesicular trafficking of proteins at the trans-Golgi network. Signaling adapter which plays a role in neuronal differentiation. Involved in regulation of NGF-dependent neurite outgrowth. May play a role in neuronal vesicular trafficking, specifically involving pre-synaptic membrane proteins. Seems to be involved in signaling pathways that are regulated by the prolonged activation of MAPK. Can regulate the polyubiquitination of IKBKG and thus may be involved in regulation of the NF-kappa-B pathway. This is AP-4 complex accessory subunit RUSC1 from Homo sapiens (Human).